Consider the following 340-residue polypeptide: Hyaluronan and proteoglycan link protein 2 (340 aa).

The N-terminal stretch at 1-26 (MPGWLTLPTLCRFLLWAFTIFHKAQG) is a signal peptide. The 111-residue stretch at 34-144 (PHYLLPPIHE…EDESVALTLS (111 aa)) folds into the Ig-like V-type domain. 5 disulfides stabilise this stretch: Cys57–Cys128, Cys170–Cys240, Cys194–Cys215, Cys265–Cys336, and Cys290–Cys311. Link domains lie at 148–242 (VVFP…FCFT) and 245–338 (LAGQ…YCYA).

It belongs to the HAPLN family. As to expression, expressed only in adult brain.

The protein localises to the secreted. Its subcellular location is the extracellular space. The protein resides in the extracellular matrix. Mediates a firm binding of versican V2 to hyaluronic acid. May play a pivotal role in the formation of the hyaluronan-associated matrix in the central nervous system (CNS) which facilitates neuronal conduction and general structural stabilization. Binds to hyaluronic acid. The protein is Hyaluronan and proteoglycan link protein 2 (HAPLN2) of Homo sapiens (Human).